The sequence spans 255 residues: Triosephosphate isomerase (255 aa).

A substrate-binding site is contributed by 9 to 11; the sequence is NWK. Histidine 95 acts as the Electrophile in catalysis. The active-site Proton acceptor is glutamate 167. Substrate is bound by residues glycine 173, serine 212, and 233–234; that span reads GG.

It belongs to the triosephosphate isomerase family. In terms of assembly, homodimer.

It localises to the cytoplasm. It catalyses the reaction D-glyceraldehyde 3-phosphate = dihydroxyacetone phosphate. The protein operates within carbohydrate biosynthesis; gluconeogenesis. It functions in the pathway carbohydrate degradation; glycolysis; D-glyceraldehyde 3-phosphate from glycerone phosphate: step 1/1. In terms of biological role, involved in the gluconeogenesis. Catalyzes stereospecifically the conversion of dihydroxyacetone phosphate (DHAP) to D-glyceraldehyde-3-phosphate (G3P). The protein is Triosephosphate isomerase of Salmonella agona (strain SL483).